The sequence spans 98 residues: Integration host factor subunit beta (98 aa).

This sequence belongs to the bacterial histone-like protein family. In terms of assembly, heterodimer of an alpha and a beta chain.

In terms of biological role, this protein is one of the two subunits of integration host factor, a specific DNA-binding protein that functions in genetic recombination as well as in transcriptional and translational control. In Marinobacter nauticus (strain ATCC 700491 / DSM 11845 / VT8) (Marinobacter aquaeolei), this protein is Integration host factor subunit beta.